The chain runs to 130 residues: Mitochondrial pyruvate carrier 1 (130 aa).

The next 2 membrane-spanning stretches (helical) occupy residues 23–45 (LKYI…IAAI) and 55–77 (ISGP…ALSV).

It belongs to the mitochondrial pyruvate carrier (MPC) (TC 2.A.105) family. The functional 150 kDa pyruvate import complex is a heteromer of MPC1 and either MPC2 or MPC3.

Its subcellular location is the mitochondrion. It localises to the mitochondrion inner membrane. Its function is as follows. Mediates the uptake of pyruvate into mitochondria. In Saccharomyces cerevisiae (strain ATCC 204508 / S288c) (Baker's yeast), this protein is Mitochondrial pyruvate carrier 1.